Consider the following 658-residue polypeptide: Glycogen debranching enzyme (658 aa).

Asp336 (nucleophile) is an active-site residue. The Proton donor role is filled by Glu371.

The protein belongs to the glycosyl hydrolase 13 family.

It catalyses the reaction Hydrolysis of (1-&gt;6)-alpha-D-glucosidic linkages to branches with degrees of polymerization of three or four glucose residues in limit dextrin.. It functions in the pathway glycan degradation; glycogen degradation. Functionally, removes maltotriose and maltotetraose chains that are attached by 1,6-alpha-linkage to the limit dextrin main chain, generating a debranched limit dextrin. This Klebsiella pneumoniae (strain 342) protein is Glycogen debranching enzyme.